The sequence spans 615 residues: DNA mismatch repair protein MutL (615 aa).

Positions 363-397 (FAEPAAREPVAPRYSPAPASGSRPAAPWPNAQPGY) are disordered. Positions 364-387 (AEPAAREPVAPRYSPAPASGSRPA) are enriched in low complexity.

This sequence belongs to the DNA mismatch repair MutL/HexB family.

This protein is involved in the repair of mismatches in DNA. It is required for dam-dependent methyl-directed DNA mismatch repair. May act as a 'molecular matchmaker', a protein that promotes the formation of a stable complex between two or more DNA-binding proteins in an ATP-dependent manner without itself being part of a final effector complex. The polypeptide is DNA mismatch repair protein MutL (Shigella flexneri).